The following is a 481-amino-acid chain: Phosphoglucosamine mutase (481 aa).

S128 functions as the Phosphoserine intermediate in the catalytic mechanism. Mg(2+) contacts are provided by S128, D269, D271, and D273. Position 128 is a phosphoserine (S128).

The protein belongs to the phosphohexose mutase family. The cofactor is Mg(2+). In terms of processing, activated by phosphorylation.

The enzyme catalyses alpha-D-glucosamine 1-phosphate = D-glucosamine 6-phosphate. Its function is as follows. Catalyzes the conversion of glucosamine-6-phosphate to glucosamine-1-phosphate. This chain is Phosphoglucosamine mutase, found in Synechocystis sp. (strain ATCC 27184 / PCC 6803 / Kazusa).